Here is a 602-residue protein sequence, read N- to C-terminus: Myotubularin (602 aa).

The interval 1-32 is disordered; it reads MASNSTPKYNSNSLENSLRRSPGDGMNHEQND. Residues 17–31 are compositionally biased toward basic and acidic residues; sequence SLRRSPGDGMNHEQN. The GRAM domain occupies 28-96; sequence HEQNDEIPCL…GVIARIEKMG (69 aa). The Myotubularin phosphatase domain maps to 162-537; it reads GWAVYDAMTE…RHLELWVNYY (376 aa). A 1,2-diacyl-sn-glycero-3-phospho-(1D-myo-inositol-3,5-bisphosphate) contacts are provided by Asn-287, Asn-312, and Ile-313. 3 residues coordinate a 1,2-diacyl-sn-glycero-3-phospho-(1D-myo-inositol-3-phosphate): Asn-287, Asn-312, and Ile-313. Cys-374 serves as the catalytic Phosphocysteine intermediate. A 1,2-diacyl-sn-glycero-3-phospho-(1D-myo-inositol-3,5-bisphosphate)-binding residues include Ser-375, Asp-376, Gly-377, Trp-378, Asp-379, Arg-380, Lys-416, and Arg-420. A 1,2-diacyl-sn-glycero-3-phospho-(1D-myo-inositol-3-phosphate)-binding residues include Ser-375, Asp-376, Gly-377, Trp-378, Asp-379, and Arg-380. Arg-420 contacts a 1,2-diacyl-sn-glycero-3-phospho-(1D-myo-inositol-3-phosphate). The interval 574-602 is disordered; that stretch reads QITNSPKMNSSTTSPSSPSQIMPQVHTPF. The span at 583-592 shows a compositional bias: low complexity; it reads SSTTSPSSPS.

This sequence belongs to the protein-tyrosine phosphatase family. Non-receptor class myotubularin subfamily.

It localises to the cytoplasm. Its subcellular location is the cell membrane. The protein resides in the cell projection. It is found in the filopodium. The protein localises to the ruffle. It localises to the late endosome. Its subcellular location is the myofibril. The protein resides in the sarcomere. The enzyme catalyses a 1,2-diacyl-sn-glycero-3-phospho-(1D-myo-inositol-3-phosphate) + H2O = a 1,2-diacyl-sn-glycero-3-phospho-(1D-myo-inositol) + phosphate. It carries out the reaction a 1,2-diacyl-sn-glycero-3-phospho-(1D-myo-inositol-3,5-bisphosphate) + H2O = a 1,2-diacyl-sn-glycero-3-phospho-(1D-myo-inositol-5-phosphate) + phosphate. The catalysed reaction is 1,2-dioctanoyl-sn-glycero-3-phospho-(1-D-myo-inositol-3-phosphate) + H2O = 1,2-dioctanoyl-sn-glycero-3-phospho-(1D-myo-inositol) + phosphate. It catalyses the reaction 1,2-dioctanoyl-sn-glycero-3-phospho-(1D-myo-inositol-3,5-bisphosphate) + H2O = 1,2-dioctanoyl-sn-glycero-3-phospho-(1D-myo-inositol-5-phosphate) + phosphate. The enzyme catalyses 1,2-dihexadecanoyl-sn-glycero-3-phospho-(1D-myo-inositol-3,5-phosphate) + H2O = 1,2-dihexadecanoyl-sn-glycero-3-phospho-(1D-myo-inositol-5-phosphate) + phosphate. Its function is as follows. Lipid phosphatase which dephosphorylates phosphatidylinositol 3-monophosphate (PI3P) and phosphatidylinositol 3,5-bisphosphate (PI(3,5)P2). This Xenopus tropicalis (Western clawed frog) protein is Myotubularin (mtm1).